Here is a 707-residue protein sequence, read N- to C-terminus: Ribosomal RNA large subunit methyltransferase K/L (707 aa).

The THUMP domain occupies 44–155 (VIYNLCLWSR…NDILTVSFDL (112 aa)).

It belongs to the methyltransferase superfamily. RlmKL family.

The protein resides in the cytoplasm. It carries out the reaction guanosine(2445) in 23S rRNA + S-adenosyl-L-methionine = N(2)-methylguanosine(2445) in 23S rRNA + S-adenosyl-L-homocysteine + H(+). The enzyme catalyses guanosine(2069) in 23S rRNA + S-adenosyl-L-methionine = N(2)-methylguanosine(2069) in 23S rRNA + S-adenosyl-L-homocysteine + H(+). In terms of biological role, specifically methylates the guanine in position 2445 (m2G2445) and the guanine in position 2069 (m7G2069) of 23S rRNA. The chain is Ribosomal RNA large subunit methyltransferase K/L from Legionella pneumophila subsp. pneumophila (strain Philadelphia 1 / ATCC 33152 / DSM 7513).